The sequence spans 253 residues: Adapter protein MecA (253 aa).

It belongs to the MecA family. As to quaternary structure, homodimer.

Enables the recognition and targeting of unfolded and aggregated proteins to the ClpC protease or to other proteins involved in proteolysis. The protein is Adapter protein MecA of Streptococcus pyogenes serotype M18 (strain MGAS8232).